The primary structure comprises 210 residues: Protein-L-isoaspartate O-methyltransferase (210 aa).

Serine 52 is an active-site residue.

Belongs to the methyltransferase superfamily. L-isoaspartyl/D-aspartyl protein methyltransferase family.

The protein resides in the cytoplasm. The enzyme catalyses [protein]-L-isoaspartate + S-adenosyl-L-methionine = [protein]-L-isoaspartate alpha-methyl ester + S-adenosyl-L-homocysteine. Its function is as follows. Catalyzes the methyl esterification of L-isoaspartyl residues in peptides and proteins that result from spontaneous decomposition of normal L-aspartyl and L-asparaginyl residues. It plays a role in the repair and/or degradation of damaged proteins. The protein is Protein-L-isoaspartate O-methyltransferase of Protochlamydia amoebophila (strain UWE25).